A 715-amino-acid chain; its full sequence is Myosin light chain kinase 3 (715 aa).

The interval 67–114 (VTLPNDPSSQHSPEAHTGASEPLKPVSAGESSKALQKAKEISVKSSEP) is disordered. In terms of domain architecture, Protein kinase spans 404-659 (VNPVEVLGGG…ASGCMKHSWL (256 aa)). Residues 410-418 (LGGGRFGQV) and K433 contribute to the ATP site. The Proton acceptor role is filled by D525.

The protein belongs to the protein kinase superfamily. CAMK Ser/Thr protein kinase family. Mg(2+) is required as a cofactor. Post-translationally, phosphorylated on serine residues.

The protein resides in the cytoplasm. It carries out the reaction L-seryl-[myosin light chain] + ATP = O-phospho-L-seryl-[myosin light chain] + ADP + H(+). It catalyses the reaction L-threonyl-[myosin light chain] + ATP = O-phospho-L-threonyl-[myosin light chain] + ADP + H(+). Its function is as follows. Kinase that phosphorylates MYL2 in vitro. Increases cardiomyocyte contractility. Required for sarcomere formation in the developing heart. The sequence is that of Myosin light chain kinase 3 (mylk3) from Danio rerio (Zebrafish).